A 153-amino-acid chain; its full sequence is Large ribosomal subunit protein bL9 (153 aa).

Belongs to the bacterial ribosomal protein bL9 family.

Functionally, binds to the 23S rRNA. The sequence is that of Large ribosomal subunit protein bL9 from Micrococcus luteus (strain ATCC 4698 / DSM 20030 / JCM 1464 / CCM 169 / CCUG 5858 / IAM 1056 / NBRC 3333 / NCIMB 9278 / NCTC 2665 / VKM Ac-2230) (Micrococcus lysodeikticus).